Reading from the N-terminus, the 266-residue chain is Elongation factor Ts (266 aa).

Residues 80 to 83 (TDFV) are involved in Mg(2+) ion dislocation from EF-Tu.

The protein belongs to the EF-Ts family.

It is found in the cytoplasm. Its function is as follows. Associates with the EF-Tu.GDP complex and induces the exchange of GDP to GTP. It remains bound to the aminoacyl-tRNA.EF-Tu.GTP complex up to the GTP hydrolysis stage on the ribosome. The protein is Elongation factor Ts of Buchnera aphidicola subsp. Baizongia pistaciae (strain Bp).